Here is a 210-residue protein sequence, read N- to C-terminus: MALQSLPCRHGSPTIRLTADTPIVPDSERLPLKRDEPGSRSMRSTFIPSSQCSNLSSATASSSRRRSCRRYQHGEAVASSSTRWRTKWNLFIICLLLLCLPGLAVRYMHDMFSPCISGVANSQHSSSQSPRSHCRSLVPSFIAIYSASVVLCALISCFLDPYETTLPLTNVTNCLTLFRSSGSLRSEHRCSTSDSRRSRQQLSITSRGSA.

Positions 26 to 38 are enriched in basic and acidic residues; the sequence is DSERLPLKRDEPG. A disordered region spans residues 26 to 58; sequence DSERLPLKRDEPGSRSMRSTFIPSSQCSNLSSA. Low complexity predominate over residues 49 to 58; the sequence is SSQCSNLSSA.

It catalyses the reaction cutin + H2O = cutin monomers.. In Phytophthora capsici, this protein is Putative cutinase.